A 305-amino-acid chain; its full sequence is Serine/threonine-protein phosphatase ppe1 (305 aa).

Mn(2+)-binding residues include aspartate 51, histidine 53, aspartate 79, and asparagine 111. Catalysis depends on histidine 112, which acts as the Proton donor. 2 residues coordinate Mn(2+): histidine 161 and histidine 235.

The protein belongs to the PPP phosphatase family. PP-6 (PP-V) subfamily. Interacts with sts5, ekc1 and mis12. It depends on Mn(2+) as a cofactor.

Its subcellular location is the nucleus. It catalyses the reaction O-phospho-L-seryl-[protein] + H2O = L-seryl-[protein] + phosphate. The enzyme catalyses O-phospho-L-threonyl-[protein] + H2O = L-threonyl-[protein] + phosphate. Has a role in chromosome segregation. May provide a dynamic connection between kinetochore microtubules and kinetochore chromatin. Negatively regulates mis12. The protein is Serine/threonine-protein phosphatase ppe1 (ppe1) of Schizosaccharomyces pombe (strain 972 / ATCC 24843) (Fission yeast).